The primary structure comprises 942 residues: Lambda-carrageenase (942 aa).

Positions 1–25 (MKIKILSAMIASSLLIGCVIPTVKA) are cleaved as a signal peptide.

As to quaternary structure, monomer.

Its subcellular location is the secreted. The catalysed reaction is Endohydrolysis of (1-&gt;4)-beta-linkages in the backbone of lambda-carrageenan, resulting in the tetrasaccharide alpha-D-Galp2,6S2-(1-&gt;3)-beta-D-Galp2S-(1-&gt;4)-alpha-D-Galp2,6S2-(1-&gt;3)-D-Galp2S.. Its function is as follows. Hydrolyzes lambda-carrageenan with inversion of anomeric configuration. Does not hydrolyze iota- and kappa-carrageenans, agarose or porphyran. This Pseudoalteromonas sp protein is Lambda-carrageenase.